Here is a 525-residue protein sequence, read N- to C-terminus: Probable protein kinase UbiB (525 aa).

Positions 118–500 constitute a Protein kinase domain; that stretch reads DFERVPVASA…QKRTNRLLQG (383 aa). Residues 124 to 132 and Lys-150 each bind ATP; that span reads VASASIAQV. The Proton acceptor role is filled by Asp-285. A helical membrane pass occupies residues 501–521; that stretch reads LLLFGVAVGVGAALARVFLAL.

Belongs to the ABC1 family. UbiB subfamily.

The protein resides in the cell inner membrane. It functions in the pathway cofactor biosynthesis; ubiquinone biosynthesis [regulation]. Is probably a protein kinase regulator of UbiI activity which is involved in aerobic coenzyme Q (ubiquinone) biosynthesis. The chain is Probable protein kinase UbiB from Paraburkholderia xenovorans (strain LB400).